The chain runs to 155 residues: Small ribosomal subunit protein uS7c (155 aa).

It belongs to the universal ribosomal protein uS7 family. In terms of assembly, part of the 30S ribosomal subunit.

Its subcellular location is the plastid. The protein localises to the chloroplast. One of the primary rRNA binding proteins, it binds directly to 16S rRNA where it nucleates assembly of the head domain of the 30S subunit. In Chaetosphaeridium globosum (Charophycean green alga), this protein is Small ribosomal subunit protein uS7c (rps7).